Consider the following 319-residue polypeptide: ATP-dependent 6-phosphofructokinase (319 aa).

Gly-11 lines the ATP pocket. Position 21–25 (21–25 (RAVVR)) interacts with ADP. ATP is bound by residues 72-73 (RC) and 102-105 (GDGS). Residue Asp-103 coordinates Mg(2+). 125-127 (TID) is a binding site for substrate. The active-site Proton acceptor is the Asp-127. ADP is bound at residue Arg-154. 169–171 (MGR) lines the substrate pocket. ADP-binding positions include 185–187 (GAE), Arg-211, and 213–215 (KKH). Residues Glu-222, Arg-243, and 249 to 252 (HIQR) contribute to the substrate site.

This sequence belongs to the phosphofructokinase type A (PFKA) family. ATP-dependent PFK group I subfamily. Prokaryotic clade 'B1' sub-subfamily. As to quaternary structure, homotetramer. Mg(2+) is required as a cofactor.

The protein localises to the cytoplasm. The enzyme catalyses beta-D-fructose 6-phosphate + ATP = beta-D-fructose 1,6-bisphosphate + ADP + H(+). The protein operates within carbohydrate degradation; glycolysis; D-glyceraldehyde 3-phosphate and glycerone phosphate from D-glucose: step 3/4. Allosterically activated by ADP and other diphosphonucleosides, and allosterically inhibited by phosphoenolpyruvate. Catalyzes the phosphorylation of D-fructose 6-phosphate to fructose 1,6-bisphosphate by ATP, the first committing step of glycolysis. In Lysinibacillus sphaericus (Bacillus sphaericus), this protein is ATP-dependent 6-phosphofructokinase.